The primary structure comprises 183 residues: MADMKSIQADARERMGKAIEALESNLSVLRTGRANPGILKKVIVDYYGSTMPIDQVASITTPDARTLVITPWDRGALGPIEKAIRDSDLGLNPNNKGDTIFISLPMLTEERRKDLVKNAKNYAEDARIAVRNIRKHALDEVKKVEGVGDDEIKRGEAEVQKITDEFIARVDSTFHKKEQEILG.

This sequence belongs to the RRF family.

Its subcellular location is the cytoplasm. Its function is as follows. Responsible for the release of ribosomes from messenger RNA at the termination of protein biosynthesis. May increase the efficiency of translation by recycling ribosomes from one round of translation to another. This Deinococcus deserti (strain DSM 17065 / CIP 109153 / LMG 22923 / VCD115) protein is Ribosome-recycling factor.